A 271-amino-acid chain; its full sequence is Large ribosomal subunit protein uL2 (271 aa).

The segment at 221–271 (RGVAMNPVDHPMGGGEGKSSGGHPRNRNGIPSNGFKTRNKKKITNKYIIKK) is disordered. Residues 257-271 (TRNKKKITNKYIIKK) are compositionally biased toward basic residues.

This sequence belongs to the universal ribosomal protein uL2 family. In terms of assembly, part of the 50S ribosomal subunit. Forms a bridge to the 30S subunit in the 70S ribosome.

Functionally, one of the primary rRNA binding proteins. Required for association of the 30S and 50S subunits to form the 70S ribosome, for tRNA binding and peptide bond formation. It has been suggested to have peptidyltransferase activity; this is somewhat controversial. Makes several contacts with the 16S rRNA in the 70S ribosome. This chain is Large ribosomal subunit protein uL2, found in Karelsulcia muelleri (strain GWSS) (Sulcia muelleri).